The primary structure comprises 417 residues: XO lethal protein 1 (417 aa).

Residues 373–417 (VSPGETSSEGISDEHHYEEYDEDDIMEEEEAPSARQDDTYDEDEE) are disordered. The span at 391-403 (EYDEDDIMEEEEA) shows a compositional bias: acidic residues.

Belongs to the GHMP kinase family. Xol-1 subfamily.

It localises to the nucleus. Functionally, sex-determining factor that is required for sexual differentiation and X chromosome dosage compensation to promote male development. High expression during gastrulation triggers male development, while low expression at that time triggers hermaphrodite development. Although related to GHMP kinase, its mode of action remains unclear. This is XO lethal protein 1 from Caenorhabditis elegans.